The primary structure comprises 545 residues: 4-coumarate--CoA ligase 2 (545 aa).

Serine 192, serine 193, glycine 194, threonine 195, threonine 196, and lysine 200 together coordinate ATP. Residues tyrosine 242 and serine 246 each coordinate (E)-4-coumaroyl-AMP. A CoA-binding site is contributed by lysine 263. An SBD1 region spans residues 265 to 334 (DIAQFLELIP…AKFPNAKLGQ (70 aa)). Alanine 312, glutamine 334, glycine 335, threonine 339, and methionine 347 together coordinate (E)-4-coumaroyl-AMP. Residues glutamine 334, glycine 335, and threonine 339 each contribute to the ATP site. The segment at 335–402 (GYGMTEAGPV…IRGDQIMKGY (68 aa)) is SBD2. Residues aspartate 423 and arginine 438 each coordinate ATP. (E)-4-coumaroyl-AMP contacts are provided by lysine 440 and lysine 444. Residues lysine 446 and glycine 447 each contribute to the CoA site. Lysine 529 is an ATP binding site.

The protein belongs to the ATP-dependent AMP-binding enzyme family. Requires Mg(2+) as cofactor.

It catalyses the reaction (E)-4-coumarate + ATP + CoA = (E)-4-coumaroyl-CoA + AMP + diphosphate. The enzyme catalyses (E)-4-coumarate + ATP + H(+) = (E)-4-coumaroyl-AMP + diphosphate. It carries out the reaction (E)-4-coumaroyl-AMP + CoA = (E)-4-coumaroyl-CoA + AMP + H(+). It functions in the pathway phytoalexin biosynthesis; 3,4',5-trihydroxystilbene biosynthesis; 3,4',5-trihydroxystilbene from trans-4-coumarate: step 1/2. Carboxylate--CoA ligase that may use 4-coumarate as substrate. Follows a two-step reaction mechanism, wherein the carboxylate substrate first undergoes adenylation by ATP, followed by a thioesterification in the presence of CoA to yield the final CoA thioester. The chain is 4-coumarate--CoA ligase 2 (4CL2) from Solanum tuberosum (Potato).